The following is a 205-amino-acid chain: MDIMKDKIRQALSELDILATEVQIDQWLDYLKLLEKWNKVYNMTAIKNIDEMLVKHLFDSLAVAKYIKGDSTVDVGTGGGLPGVVLAILYPQHQFTLVDSVGKKIMFLKNVKKSLSLNNINPINTRIENLEGNFDNIISRAFSSVDTFYELCKHFLTEHNQMLAMKGRDLEERNLESLPLNIEKYSIKVPFLNAERNLIVMRKKL.

S-adenosyl-L-methionine is bound by residues Gly-76, Leu-81, 127–128, and Arg-140; that span reads IE.

It belongs to the methyltransferase superfamily. RNA methyltransferase RsmG family.

Its subcellular location is the cytoplasm. The enzyme catalyses guanosine(527) in 16S rRNA + S-adenosyl-L-methionine = N(7)-methylguanosine(527) in 16S rRNA + S-adenosyl-L-homocysteine. Its function is as follows. Specifically methylates the N7 position of guanine in position 527 of 16S rRNA. This Francisella tularensis subsp. novicida (strain U112) protein is Ribosomal RNA small subunit methyltransferase G.